A 513-amino-acid chain; its full sequence is Glycogen synthase (513 aa).

An ADP-alpha-D-glucose-binding site is contributed by Lys47.

Belongs to the glycosyltransferase 1 family. Bacterial/plant glycogen synthase subfamily.

It carries out the reaction [(1-&gt;4)-alpha-D-glucosyl](n) + ADP-alpha-D-glucose = [(1-&gt;4)-alpha-D-glucosyl](n+1) + ADP + H(+). It participates in glycan biosynthesis; glycogen biosynthesis. Synthesizes alpha-1,4-glucan chains using ADP-glucose. This Pseudomonas paraeruginosa (strain DSM 24068 / PA7) (Pseudomonas aeruginosa (strain PA7)) protein is Glycogen synthase.